We begin with the raw amino-acid sequence, 205 residues long: High frequency lysogenization protein HflD homolog (205 aa).

This sequence belongs to the HflD family.

The protein localises to the cytoplasm. It localises to the cell inner membrane. This chain is High frequency lysogenization protein HflD homolog, found in Vibrio campbellii (strain ATCC BAA-1116).